The chain runs to 178 residues: Ribosome maturation factor RimM (178 aa).

A PRC barrel domain is found at 99–178 (EGDYYWHDLI…TIEVDWDAGF (80 aa)).

It belongs to the RimM family. Binds ribosomal protein uS19.

Its subcellular location is the cytoplasm. Functionally, an accessory protein needed during the final step in the assembly of 30S ribosomal subunit, possibly for assembly of the head region. Essential for efficient processing of 16S rRNA. May be needed both before and after RbfA during the maturation of 16S rRNA. It has affinity for free ribosomal 30S subunits but not for 70S ribosomes. The chain is Ribosome maturation factor RimM from Haemophilus influenzae (strain ATCC 51907 / DSM 11121 / KW20 / Rd).